The primary structure comprises 186 residues: MNKFLFAAALIVSGLLVGCNQLTQYTITEQEINQSLAKHNNFSKDIGLPGVADAHIVLTNLTSQIGREEPNKVTLTGDANLDMNSLFGSQKATMKLKLKALPVFDKEKGAIFLKEMEVVDATVQPEKMQTVMQTLLPYLNQALRNYFNQQPAYVLREDGSQGEAMAKKLAKGIEVKPGEIVIPFTD.

Residues 1 to 18 form the signal peptide; the sequence is MNKFLFAAALIVSGLLVG. Cys19 carries N-palmitoyl cysteine lipidation. A lipid anchor (S-diacylglycerol cysteine) is attached at Cys19.

Its subcellular location is the cell membrane. This is an uncharacterized protein from Escherichia coli (strain K12).